We begin with the raw amino-acid sequence, 267 residues long: MDMERNRLYFFYKRDDKLIERVKPLIELAERGPFVVVDDYREANIIVSIGDDGAFLQAVRQTGFLPDRLYVGVSVLPARGFYCDFHIDDIDHMVEAAKNWKLEVRRYPIIEVTIDGAASFFCLNECSIRSQIIKTMAIDVFIDDLHFETFRGDGIIVSTPTGSTGYNKSVHGAVVDPLLPCFQVSELASLNSNRYRTLGSPFILSGSRTLTLKMSEETSHFPIIGLDNEALSIQHIERIDIRLSDRVVKTVRLKDNSFWDKVKRVFL.

Catalysis depends on aspartate 52, which acts as the Proton acceptor. NAD(+) is bound by residues 52–53 (DG), 124–125 (NE), arginine 151, aspartate 153, 164–169 (TGYNKS), and alanine 188.

It belongs to the NAD kinase family. The cofactor is a divalent metal cation.

Its subcellular location is the cytoplasm. The catalysed reaction is NAD(+) + ATP = ADP + NADP(+) + H(+). Its function is as follows. Involved in the regulation of the intracellular balance of NAD and NADP, and is a key enzyme in the biosynthesis of NADP. Catalyzes specifically the phosphorylation on 2'-hydroxyl of the adenosine moiety of NAD to yield NADP. The chain is NAD kinase 2 from Geobacillus kaustophilus (strain HTA426).